The following is a 352-amino-acid chain: Biotin synthase (352 aa).

The Radical SAM core domain maps to 44 to 262; that stretch reads NRVQVSTLLS…LAVARLLMPK (219 aa). [4Fe-4S] cluster is bound by residues Cys59, Cys63, and Cys66. [2Fe-2S] cluster is bound by residues Cys103, Cys134, Cys194, and Arg266.

It belongs to the radical SAM superfamily. Biotin synthase family. As to quaternary structure, homodimer. The cofactor is [4Fe-4S] cluster. [2Fe-2S] cluster is required as a cofactor.

The catalysed reaction is (4R,5S)-dethiobiotin + (sulfur carrier)-SH + 2 reduced [2Fe-2S]-[ferredoxin] + 2 S-adenosyl-L-methionine = (sulfur carrier)-H + biotin + 2 5'-deoxyadenosine + 2 L-methionine + 2 oxidized [2Fe-2S]-[ferredoxin]. Its pathway is cofactor biosynthesis; biotin biosynthesis; biotin from 7,8-diaminononanoate: step 2/2. Catalyzes the conversion of dethiobiotin (DTB) to biotin by the insertion of a sulfur atom into dethiobiotin via a radical-based mechanism. The protein is Biotin synthase of Pseudomonas putida (strain W619).